Here is a 439-residue protein sequence, read N- to C-terminus: Acyl transferase 4 (439 aa).

Catalysis depends on proton acceptor residues H166 and D382.

Belongs to the plant acyltransferase family.

Grass-specific monolignol p-coumaroyl transferase involved in the biosynthesis of acylated monolignols or monolignol conjugates that serve as monomer precursors of lignin. Can synthesize sinapyl p-coumarate, p-coumaryl p-coumarate, sinapyl caffeate and p-coumaryl caffeate in vitro. The protein is Acyl transferase 4 of Oryza sativa subsp. japonica (Rice).